The chain runs to 78 residues: MLVLSRKANESIKIDSNIEISILEIKKDSVKIAIKAPANIKILRSEIYDIIKEENKKSILQDKNNIHKIKNLFDYLSK.

This sequence belongs to the CsrA/RsmA family. In terms of assembly, homodimer; the beta-strands of each monomer intercalate to form a hydrophobic core, while the alpha-helices form wings that extend away from the core.

Its subcellular location is the cytoplasm. Functionally, a translational regulator that binds mRNA to regulate translation initiation and/or mRNA stability. Usually binds in the 5'-UTR at or near the Shine-Dalgarno sequence preventing ribosome-binding, thus repressing translation. Its main target seems to be the major flagellin gene, while its function is anatagonized by FliW. This is Translational regulator CsrA from Borrelia turicatae (strain 91E135).